Here is a 91-residue protein sequence, read N- to C-terminus: Protein YchS (91 aa).

This chain is Protein YchS (ychS), found in Escherichia coli O157:H7.